The chain runs to 206 residues: Probable glutathione S-transferase 6 (206 aa).

The region spanning 2–79 is the GST N-terminal domain; the sequence is VHYKLVYFPL…YLAREFGIAG (78 aa). Glutathione contacts are provided by residues Tyr-8, Trp-39, Lys-43, 49–51, and 63–64; these read GQL and QS. In terms of domain architecture, GST C-terminal spans 81 to 206; it reads NDTEAAEVDA…YIANRPDYPF (126 aa).

Belongs to the GST superfamily. Sigma family.

The enzyme catalyses RX + glutathione = an S-substituted glutathione + a halide anion + H(+). Conjugation of reduced glutathione to a wide number of exogenous and endogenous hydrophobic electrophiles. This is Probable glutathione S-transferase 6 (gst-6) from Caenorhabditis elegans.